The following is a 325-amino-acid chain: Putative aryl-alcohol dehydrogenase C750.01 (325 aa).

This sequence belongs to the aldo/keto reductase family. Aldo/keto reductase 2 subfamily.

This chain is Putative aryl-alcohol dehydrogenase C750.01, found in Schizosaccharomyces pombe (strain 972 / ATCC 24843) (Fission yeast).